The following is an 808-amino-acid chain: Probable E3 ubiquitin-protein ligase MARCHF10 (808 aa).

Disordered stretches follow at residues 33–81, 101–268, and 284–415; these read LRRQ…LTEP, QTSV…RKAS, and SRRE…EVGV. Residues 34–49 are compositionally biased toward basic and acidic residues; it reads RRQEYRRDPNEKKRDQ. The span at 237-249 shows a compositional bias: polar residues; it reads QAFQGKNSPQVLS. Basic and acidic residues-rich tracts occupy residues 330–349 and 379–397; these read KNFEENAENCRGHSSRRSEP and LPDRESATEKDRGGSENAK. An RING-CH-type zinc finger spans residues 651 to 721; that stretch reads DSEEEGDLCR…EMCKQGLLVD (71 aa). Zn(2+) contacts are provided by cysteine 659, cysteine 662, cysteine 677, cysteine 679, histidine 687, cysteine 690, cysteine 711, and cysteine 714. The tract at residues 773 to 808 is disordered; it reads ERERLSRNYPQPRTEENENSELGDGNEGSISQSQVV.

The catalysed reaction is S-ubiquitinyl-[E2 ubiquitin-conjugating enzyme]-L-cysteine + [acceptor protein]-L-lysine = [E2 ubiquitin-conjugating enzyme]-L-cysteine + N(6)-ubiquitinyl-[acceptor protein]-L-lysine.. It participates in protein modification; protein ubiquitination. E3 ubiquitin-protein ligase. E3 ubiquitin ligases accept ubiquitin from an E2 ubiquitin-conjugating enzyme in the form of a thioester and then directly transfer the ubiquitin to targeted substrates. This is Probable E3 ubiquitin-protein ligase MARCHF10 from Homo sapiens (Human).